The chain runs to 573 residues: Sulfate adenylyltransferase (573 aa).

Positions 1-169 (MANSPHGGVL…IEAVNKLNHY (169 aa)) are N-terminal. Residues 170–394 (DYVALRYTPA…LRESSPPRHT (225 aa)) are catalytic. Gln197 contacts sulfate. ATP is bound by residues 197–200 (QTRN) and 291–294 (GRDH). Active-site residues include Thr198, Arg199, and Asn200. Arg199 contacts sulfate. Residue Ala295 participates in sulfate binding. An ATP-binding site is contributed by Val333. The interval 395-573 (QGFTVFLTGY…LETEGFFDRA (179 aa)) is allosteric regulation domain; adenylyl-sulfate kinase-like. 3'-phosphoadenylyl sulfate-binding positions include 434–437 (DTVR), Arg451, 477–478 (IA), and Arg515.

It in the N-terminal section; belongs to the sulfate adenylyltransferase family. This sequence in the C-terminal section; belongs to the APS kinase family. As to quaternary structure, homohexamer. Dimer of trimers.

It is found in the cytoplasm. The catalysed reaction is sulfate + ATP + H(+) = adenosine 5'-phosphosulfate + diphosphate. It functions in the pathway sulfur metabolism; hydrogen sulfide biosynthesis; sulfite from sulfate: step 1/3. With respect to regulation, allosterically inhibited by 3'-phosphoadenosine 5'-phosphosulfate (PAPS). In terms of biological role, catalyzes the first intracellular reaction of sulfate assimilation, forming adenosine-5'-phosphosulfate (APS) from inorganic sulfate and ATP. Plays an important role in sulfate activation as a component of the biosynthesis pathway of sulfur-containing amino acids. This chain is Sulfate adenylyltransferase, found in Aspergillus oryzae (strain ATCC 42149 / RIB 40) (Yellow koji mold).